A 121-amino-acid chain; its full sequence is Acid shock protein (121 aa).

The signal sequence occupies residues 1-21 (MKKVLALMVAATLGLSSVAFA). Positions 22 to 63 (ADTTATATPAATSTTATVAAQTKATQHQKHKVTKKTTEQKAQ) are excised as a propeptide. The tract at residues 40–121 (AAQTKATQHQ…AKKPVAAPAA (82 aa)) is disordered. Residues 84–93 (AAKKHVKKAS) show a composition bias toward basic residues. Positions 94 to 103 (VQKAPVQKAQ) are enriched in low complexity. The segment covering 104–113 (AAKKHHKTAK) has biased composition (basic residues).

Belongs to the Asr family. Proteolytic processing gives rise to the active protein.

The protein resides in the periplasm. Functionally, required for growth and/or survival at acidic conditions. This is Acid shock protein from Yersinia pestis bv. Antiqua (strain Antiqua).